A 130-amino-acid polypeptide reads, in one-letter code: Small ribosomal subunit protein uS9 (130 aa).

Belongs to the universal ribosomal protein uS9 family.

The sequence is that of Small ribosomal subunit protein uS9 from Salmonella paratyphi C (strain RKS4594).